Reading from the N-terminus, the 305-residue chain is Ribosomal RNA large subunit methyltransferase F (305 aa).

This sequence belongs to the methyltransferase superfamily. METTL16/RlmF family.

The protein resides in the cytoplasm. It catalyses the reaction adenosine(1618) in 23S rRNA + S-adenosyl-L-methionine = N(6)-methyladenosine(1618) in 23S rRNA + S-adenosyl-L-homocysteine + H(+). Functionally, specifically methylates the adenine in position 1618 of 23S rRNA. The protein is Ribosomal RNA large subunit methyltransferase F of Enterobacter sp. (strain 638).